The chain runs to 362 residues: HMG box-containing protein C19G7.04 (362 aa).

The region spanning 135-299 (KCFLARLEDE…RLCKSQIKQI (165 aa)) is the SprT-like domain. Residues 306–348 (PNAFQIFLKENSKRLRKLHPHITHKELMKKLSDEYHRTKDAKQ) constitute a DNA-binding region (HMG box).

Its subcellular location is the nucleus. The protein localises to the cytoplasm. The protein resides in the cytoskeleton. It is found in the spindle. This Schizosaccharomyces pombe (strain 972 / ATCC 24843) (Fission yeast) protein is HMG box-containing protein C19G7.04.